The chain runs to 635 residues: Threonine--tRNA ligase (635 aa).

A TGS domain is found at 1-58 (MIRVICNNETVELPKGATAADFASKIKNSHYFAGVVINDQIKDLSTTLNEGDTLRFVT). Residues 237–528 (DHRVLGAKLD…LIEHFKGKFP (292 aa)) form a catalytic region. Residues C328, H379, and H505 each coordinate Zn(2+).

This sequence belongs to the class-II aminoacyl-tRNA synthetase family. As to quaternary structure, homodimer. Requires Zn(2+) as cofactor.

It localises to the cytoplasm. It carries out the reaction tRNA(Thr) + L-threonine + ATP = L-threonyl-tRNA(Thr) + AMP + diphosphate + H(+). Catalyzes the attachment of threonine to tRNA(Thr) in a two-step reaction: L-threonine is first activated by ATP to form Thr-AMP and then transferred to the acceptor end of tRNA(Thr). Also edits incorrectly charged L-seryl-tRNA(Thr). The sequence is that of Threonine--tRNA ligase from Chlamydia caviae (strain ATCC VR-813 / DSM 19441 / 03DC25 / GPIC) (Chlamydophila caviae).